Here is a 255-residue protein sequence, read N- to C-terminus: Membrane protein insertase YidC 2 (255 aa).

The first 20 residues, 1–20 (MKKKLGLLAMVVALMAITAG), serve as a signal peptide directing secretion. C21 carries N-palmitoyl cysteine lipidation. A lipid anchor (S-diacylglycerol cysteine) is attached at C21. The next 5 helical transmembrane spans lie at 59–79 (YGLA…PLMI), 129–149 (LAGC…YHAI), 160–180 (FLWF…VAAI), 202–222 (MMLW…PAAL), and 223–243 (SLYW…IKGP).

It belongs to the OXA1/ALB3/YidC family. Type 2 subfamily.

It localises to the cell membrane. In terms of biological role, required for the insertion and/or proper folding and/or complex formation of integral membrane proteins into the membrane. Involved in integration of membrane proteins that insert both dependently and independently of the Sec translocase complex, as well as at least some lipoproteins. This Bacillus anthracis protein is Membrane protein insertase YidC 2.